Reading from the N-terminus, the 214-residue chain is ATP phosphoribosyltransferase (214 aa).

This sequence belongs to the ATP phosphoribosyltransferase family. Short subfamily. In terms of assembly, heteromultimer composed of HisG and HisZ subunits.

The protein resides in the cytoplasm. The enzyme catalyses 1-(5-phospho-beta-D-ribosyl)-ATP + diphosphate = 5-phospho-alpha-D-ribose 1-diphosphate + ATP. It functions in the pathway amino-acid biosynthesis; L-histidine biosynthesis; L-histidine from 5-phospho-alpha-D-ribose 1-diphosphate: step 1/9. Catalyzes the condensation of ATP and 5-phosphoribose 1-diphosphate to form N'-(5'-phosphoribosyl)-ATP (PR-ATP). Has a crucial role in the pathway because the rate of histidine biosynthesis seems to be controlled primarily by regulation of HisG enzymatic activity. The polypeptide is ATP phosphoribosyltransferase (Halorhodospira halophila (strain DSM 244 / SL1) (Ectothiorhodospira halophila (strain DSM 244 / SL1))).